The chain runs to 265 residues: Undecaprenyl-diphosphatase (265 aa).

Transmembrane regions (helical) follow at residues 42 to 62 (AATFDVVIQLGAIMAVVVLYW), 82 to 102 (GIVLLMLTSLPACILGLLLHA), 108 to 128 (LFRPATVLIALVVGAICMILV), 157 to 177 (LALWPGFSRSAATIMGGMLLG), 181 to 201 (PLAAEYSFIAAVPIMVAATGY), 217 to 237 (FFLVGMIGSFVSALLAVKVFV), and 244 to 264 (TLIPFACYRLLIAPFVYYFMV).

This sequence belongs to the UppP family.

Its subcellular location is the cell inner membrane. The enzyme catalyses di-trans,octa-cis-undecaprenyl diphosphate + H2O = di-trans,octa-cis-undecaprenyl phosphate + phosphate + H(+). In terms of biological role, catalyzes the dephosphorylation of undecaprenyl diphosphate (UPP). Confers resistance to bacitracin. This is Undecaprenyl-diphosphatase from Desulfovibrio desulfuricans (strain ATCC 27774 / DSM 6949 / MB).